The primary structure comprises 82 residues: Envelope small membrane protein (82 aa).

At 1 to 16 (MLPFVHEQIGTIIVNF) the chain is on the virion surface side. The helical transmembrane segment at 17–37 (FILTVVCAITLLVCLAVLTAI) threads the bilayer. At 38 to 78 (RLCVQCASGVNTLLFVPAFYIYNTGRNAYFKFQENRPPFPP) the chain is on the intravirion side.

Belongs to the betacoronaviruses E protein family. In terms of assembly, homopentamer. Interacts with membrane protein M in the budding compartment of the host cell, which is located between endoplasmic reticulum and the Golgi complex. Interacts with Nucleoprotein.

The protein resides in the host Golgi apparatus membrane. In terms of biological role, plays a central role in virus morphogenesis and assembly. Acts as a viroporin and self-assembles in host membranes forming pentameric protein-lipid pores that allow ion transport. Also plays a role in the induction of apoptosis. The polypeptide is Envelope small membrane protein (Tylonycteris pachypus (Lesser bamboo bat)).